The primary structure comprises 102 residues: Putative septation protein SpoVG 1 (102 aa).

The protein belongs to the SpoVG family.

In terms of biological role, could be involved in septation. This is Putative septation protein SpoVG 1 from Listeria monocytogenes serotype 4b (strain F2365).